Reading from the N-terminus, the 674-residue chain is MRKILVTNALPYANGDLHLGHMLGYIQSDIWVRFQKLQGNQCIFVCGSDTHGTPIMLKAKSLGITPEELVTKYSNRHLQDFTDFEINFDNYHSTHNSLNKEIVEDIYNKLNNKNLISKKAIAQAYDPEAKMFLPDRFVKGTCPKCKAEDQYGDSCEVCGATYDPTELINPRSVISGQSPIQKNSEHFFFDLPALEKNIKDWIESNTLLQPEVANKLAEWFEQGLQSWDISRDAPYFGFAIPGTNEQKFFYVWLDAPMGYIASFKDYCNKNNINFGDFWGDSSSESELYHFIGKDIIYFHTLFWPAILSSTGYKTPTSVFANGFLTVNGKKMSKSRGTFIQARTYLDNLEPSYLRYYFASRLTSRIDDIDLNLEEFVTKSNSDIVGKVVNIASRCAGFIYKKFDATLSGEIFDPELESEFSKNHDAITQAFEKREFAHAVRLIMALADKANQFIDYHKPWQLAKEEGQEQKVHQVCSQGINMFKVLIVYLKPIIPSIVAEAERFLNIQFISWADAPKFLINHKIDKFKPLATRIEKEKVDKILEDTKKMLENEQAPQSKKEEPKLDIAAECTFDDFMKVDLRIAKITEASHVEGADKLLKLILDLGGVTKQVFAGIKSAYKPEDLIGKHTIMVANLAPRKMKFGMSEGMVLAAGDGKGIYILEPHEGAQPGMRVK.

The short motif at Pro-11–His-21 is the 'HIGH' region element. 4 residues coordinate Zn(2+): Cys-142, Cys-145, Cys-155, and Cys-158. The 'KMSKS' region motif lies at Lys-330 to Ser-334. Lys-333 provides a ligand contact to ATP. One can recognise a tRNA-binding domain in the interval Asp-574 to Lys-674.

It belongs to the class-I aminoacyl-tRNA synthetase family. MetG type 1 subfamily. In terms of assembly, homodimer. Zn(2+) is required as a cofactor.

The protein localises to the cytoplasm. The enzyme catalyses tRNA(Met) + L-methionine + ATP = L-methionyl-tRNA(Met) + AMP + diphosphate. Is required not only for elongation of protein synthesis but also for the initiation of all mRNA translation through initiator tRNA(fMet) aminoacylation. The protein is Methionine--tRNA ligase of Francisella tularensis subsp. tularensis (strain WY96-3418).